We begin with the raw amino-acid sequence, 455 residues long: Nucleolar protein 12 (455 aa).

Disordered stretches follow at residues 1–104 (MSSF…ENEN) and 117–142 (QNEE…RTKA). Over residues 24 to 37 (NTRDGPVSKDELVK) the composition is skewed to basic and acidic residues. The span at 51–66 (PKQQTNENESTLNQSA) shows a compositional bias: polar residues. Residues 68 to 91 (ESDEEEEEYNDESNEGDDSDDAEQ) show a composition bias toward acidic residues. Residues 124–141 (SKESSEAKSSKVAEERTK) show a composition bias toward basic and acidic residues. RRM domains lie at 160 to 258 (RTVF…HVSH) and 266 to 351 (RTIF…RAKS). Disordered stretches follow at residues 333-402 (LETG…RSTV) and 420-455 (AIKG…MNKV). Residues 339–348 (KKGRKLRISR) are compositionally biased toward basic residues. Residues 349-363 (AKSNAKPSLMSPNHF) show a composition bias toward polar residues. Positions 425 to 438 (KGSKKGKKVKKPRI) are enriched in basic residues. The segment covering 439–455 (RERSTKFKEERKTMNKV) has biased composition (basic and acidic residues).

Belongs to the RRM RBM34 family.

Its subcellular location is the nucleus. It is found in the nucleolus. Involved in pre-25S rRNA processing. This is Nucleolar protein 12 (NOP12) from Candida albicans (strain SC5314 / ATCC MYA-2876) (Yeast).